A 97-amino-acid chain; its full sequence is Large ribosomal subunit protein uL23 (97 aa).

It belongs to the universal ribosomal protein uL23 family. Part of the 50S ribosomal subunit. Contacts protein L29, and trigger factor when it is bound to the ribosome.

Its function is as follows. One of the early assembly proteins it binds 23S rRNA. One of the proteins that surrounds the polypeptide exit tunnel on the outside of the ribosome. Forms the main docking site for trigger factor binding to the ribosome. In Anaeromyxobacter dehalogenans (strain 2CP-C), this protein is Large ribosomal subunit protein uL23.